The chain runs to 476 residues: Glycogen synthase (476 aa).

Lys-15 serves as a coordination point for ADP-alpha-D-glucose.

This sequence belongs to the glycosyltransferase 1 family. Bacterial/plant glycogen synthase subfamily.

It catalyses the reaction [(1-&gt;4)-alpha-D-glucosyl](n) + ADP-alpha-D-glucose = [(1-&gt;4)-alpha-D-glucosyl](n+1) + ADP + H(+). It participates in glycan biosynthesis; glycogen biosynthesis. In terms of biological role, synthesizes alpha-1,4-glucan chains using ADP-glucose. This is Glycogen synthase from Mycoplasma mobile (strain ATCC 43663 / 163K / NCTC 11711) (Mesomycoplasma mobile).